Reading from the N-terminus, the 634-residue chain is 1-deoxy-D-xylulose-5-phosphate synthase (634 aa).

Residues histidine 73 and 114–116 (GHS) contribute to the thiamine diphosphate site. Residue aspartate 145 coordinates Mg(2+). Residues 146–147 (GA), asparagine 174, tyrosine 285, and glutamate 365 each bind thiamine diphosphate. Asparagine 174 contributes to the Mg(2+) binding site.

Belongs to the transketolase family. DXPS subfamily. As to quaternary structure, homodimer. Mg(2+) is required as a cofactor. The cofactor is thiamine diphosphate.

The enzyme catalyses D-glyceraldehyde 3-phosphate + pyruvate + H(+) = 1-deoxy-D-xylulose 5-phosphate + CO2. It functions in the pathway metabolic intermediate biosynthesis; 1-deoxy-D-xylulose 5-phosphate biosynthesis; 1-deoxy-D-xylulose 5-phosphate from D-glyceraldehyde 3-phosphate and pyruvate: step 1/1. In terms of biological role, catalyzes the acyloin condensation reaction between C atoms 2 and 3 of pyruvate and glyceraldehyde 3-phosphate to yield 1-deoxy-D-xylulose-5-phosphate (DXP). In Desulforudis audaxviator (strain MP104C), this protein is 1-deoxy-D-xylulose-5-phosphate synthase.